Reading from the N-terminus, the 127-residue chain is Translation initiation factor 5A (127 aa).

K35 carries the hypusine modification.

The protein belongs to the eIF-5A family.

Its subcellular location is the cytoplasm. Functionally, functions by promoting the formation of the first peptide bond. The sequence is that of Translation initiation factor 5A from Methanococcoides burtonii (strain DSM 6242 / NBRC 107633 / OCM 468 / ACE-M).